The following is an 87-amino-acid chain: Phosphocarrier protein HPr (87 aa).

The 87-residue stretch at 1 to 87 (MAEKTFTITA…EEVIKEGLGE (87 aa)) folds into the HPr domain. His-15 functions as the Pros-phosphohistidine intermediate in the catalytic mechanism. Ser-46 is subject to Phosphoserine; by HPrK/P.

This sequence belongs to the HPr family.

Its subcellular location is the cytoplasm. With respect to regulation, phosphorylation on Ser-46 inhibits the phosphoryl transfer from enzyme I to HPr. Its function is as follows. General (non sugar-specific) component of the phosphoenolpyruvate-dependent sugar phosphotransferase system (sugar PTS). This major carbohydrate active-transport system catalyzes the phosphorylation of incoming sugar substrates concomitantly with their translocation across the cell membrane. The phosphoryl group from phosphoenolpyruvate (PEP) is transferred to the phosphoryl carrier protein HPr by enzyme I. Phospho-HPr then transfers it to the PTS EIIA domain. P-Ser-HPr interacts with the catabolite control protein A (CcpA), forming a complex that binds to DNA at the catabolite response elements cre, operator sites preceding a large number of catabolite-regulated genes. Thus, P-Ser-HPr is a corepressor in carbon catabolite repression (CCR), a mechanism that allows bacteria to coordinate and optimize the utilization of available carbon sources. P-Ser-HPr also plays a role in inducer exclusion, in which it probably interacts with several non-PTS permeases and inhibits their transport activity. This is Phosphocarrier protein HPr (ptsH) from Halalkalibacterium halodurans (strain ATCC BAA-125 / DSM 18197 / FERM 7344 / JCM 9153 / C-125) (Bacillus halodurans).